Consider the following 334-residue polypeptide: MLNTLIVGASGYTGAELALYLNRHPQMNITALMVSAQSVDAGKLISDLHPQLKGIIDVPVKPLTDAEEAAKGVDVVFLATDHKVSHDLAPVFLAAGCTVFDLSGAFRVQDAEFYRRYYGFEHQHPDWLAKAVYGLAEWRAESVKQAQLIAVPGCYPTAAQLALKPLLDAQLLNPAQWPVINAVSGVSGAGRKASMTNSFCEVSFQPYGIFNHRHEPEISTHLGTPVIFTPHLGNFARGILETITCRLQPGVTQQDVAEAYHNAYHDKPLVRLYDKGVPALKSVVGLPFCDIGFSVDGEHLIVVATEDNLLKGAAAQAVQCMNIRFGFPETQSLI.

The active site involves Cys154.

Belongs to the NAGSA dehydrogenase family. Type 1 subfamily.

The protein localises to the cytoplasm. The catalysed reaction is N-acetyl-L-glutamate 5-semialdehyde + phosphate + NADP(+) = N-acetyl-L-glutamyl 5-phosphate + NADPH + H(+). It functions in the pathway amino-acid biosynthesis; L-arginine biosynthesis; N(2)-acetyl-L-ornithine from L-glutamate: step 3/4. In terms of biological role, catalyzes the NADPH-dependent reduction of N-acetyl-5-glutamyl phosphate to yield N-acetyl-L-glutamate 5-semialdehyde. In Pectobacterium carotovorum subsp. carotovorum (strain PC1), this protein is N-acetyl-gamma-glutamyl-phosphate reductase.